A 244-amino-acid polypeptide reads, in one-letter code: Small ribosomal subunit protein eS4 (244 aa).

Positions 43-106 constitute an S4 RNA-binding domain; the sequence is LPLLLIVRDT…NENYLVLFDE (64 aa).

Belongs to the eukaryotic ribosomal protein eS4 family.

The protein is Small ribosomal subunit protein eS4 (rps4e) of Methanococcus vannielii.